Reading from the N-terminus, the 237-residue chain is Probable S-methyl-5'-thioinosine phosphorylase (237 aa).

Phosphate-binding positions include T12 and 54–55 (RH). M187 contacts substrate. T188 lines the phosphate pocket. 211–213 (NWA) serves as a coordination point for substrate.

The protein belongs to the PNP/MTAP phosphorylase family. MTAP subfamily. Homotrimer.

The catalysed reaction is S-methyl-5'-thioinosine + phosphate = 5-(methylsulfanyl)-alpha-D-ribose 1-phosphate + hypoxanthine. It participates in purine metabolism; purine nucleoside salvage. In terms of biological role, catalyzes the reversible phosphorylation of S-methyl-5'-thioinosine (MTI) to hypoxanthine and 5-methylthioribose-1-phosphate. Involved in the breakdown of S-methyl-5'-thioadenosine (MTA), a major by-product of polyamine biosynthesis. Catabolism of (MTA) occurs via deamination to MTI and phosphorolysis to hypoxanthine. This is Probable S-methyl-5'-thioinosine phosphorylase from Xylella fastidiosa (strain 9a5c).